Here is a 1098-residue protein sequence, read N- to C-terminus: MLEGDLVSKMLRAVLQSHKNGVALPRLQGEYRSLTGDWIPFKQLGFPTLEAYLRSVPAVVRIETSRSGEITCYAMACTETARIAQLVARQRSSKRKTGRQVNCQMRVKKTMPFFLEGKPKATLRQPGFASNFSVGKKPNPAPLRDKGNSVGVKPDAEMSPYMLHTTLGNEAFKDIPVQRHVTMSTNNRFSPKASLQPPLQMHLSRTSTKEMSDNLNQTVEKPNVKPPASYTYKMDEVQNRIKEILNKHNNGIWISKLPHFYKELYKEDLNQGILQQFEHWPHICTVEKPCSGGQDLLLYPAKRKQLLRSELDTEKVPLSPLPGPKQTPPLKGCPTVMAGDFKEKVADLLVKYTSGLWASALPKAFEEMYKVKFPEDALKNLASLSDVCSIDYISGNPQKAILYAKLPLPTDKIQKDAGQAHGDNDIKAMVEQEYLQVEESIAESANTFMEDITVPPLMIPTEASPSVLVVELSNTNEVVIRYVGKDYSAAQELMEDEMKEYYSKNPKITPVQAVNVGQLLAVNAEEDAWLRAQVISTEENKIKVCYVDYGFSENVEKSKAYKLNPKFCSLSFQATKCKLAGLEVLSDDPDLVKVVESLTCGKIFAVEILDKADIPLVVLYDTSGEDDININATCLKAICDKSLEVHLQVDAMYTNVKVTNICSDGTLYCQVPCKGLNKLSDLLRKIEDYFHCKHMTSECFVSLPFCGKICLFHCKGKWLRVEITNVHSSRALDVQFLDSGTVTSVKVSELREIPPRFLQEMIAIPPQAIKCCLADLPQSIGMWTPDAVLWLRDSVLNCSDCSIKVTKVDETRGIAHVYLFTPKNFPDPHRSINRQITNADLWKHQKDVFLSAISSGADSPNSKNGNMPMSGNTGENFRKNLTDVIKKSMVDHTSAFSTEELPPPVHLSKPGEHMDVYVPVACHPGYFVIQPWQEIHKLEVLMEEMILYYSVSEERHIAVEKDQVYAAKVENKWHRVLLKGILTNGLVSVYELDYGKHELVNIRKVQPLVDMFRKLPFQAVTAQLAGVKCNQWSEEASMVFRNHVEKKPLVALVQTVIENANPWDRKVVVYLVDTSLPDTDTWIHDFMSEYLIELSKVN.

Positions 3–76 constitute an HTH OST-type 1 domain; it reads EGDLVSKMLR…SGEITCYAMA (74 aa). A disordered region spans residues 129–156; the sequence is ASNFSVGKKPNPAPLRDKGNSVGVKPDA. In terms of domain architecture, HTH OST-type 2 spans 233-302; sequence KMDEVQNRIK…GQDLLLYPAK (70 aa). Position 319 is a phosphoserine (serine 319). In terms of domain architecture, HTH OST-type 3 spans 337-406; sequence MAGDFKEKVA…PQKAILYAKL (70 aa). 2 Tudor domains span residues 513-570 and 703-760; these read AVNV…FCSL and LPFC…FLQE. The tract at residues 855–874 is disordered; it reads SGADSPNSKNGNMPMSGNTG. Serine 859 is subject to Phosphoserine. Residues 861–1098 are interaction with CDK17; the sequence is NSKNGNMPMS…EYLIELSKVN (238 aa). Residues 893-1098 form an interaction with CABLES1 region; that stretch reads TSAFSTEELP…EYLIELSKVN (206 aa).

The protein belongs to the TDRD7 family. As to quaternary structure, found in a mRNP complex, at least composed of TDRD1, TDRD6, TDRD7 and DDX4. Found in a complex containing CABLES1, CDK16 and CDK17. Interacts with CABLES1, CDK17 and PIWIL1.

It localises to the cytoplasm. Component of specific cytoplasmic RNA granules involved in post-transcriptional regulation of specific genes: probably acts by binding to specific mRNAs and regulating their translation. Required for lens transparency during lens development, by regulating translation of genes such as CRYBB3 and HSPB1 in the developing lens. Also required during spermatogenesis. The sequence is that of Tudor domain-containing protein 7 (TDRD7) from Homo sapiens (Human).